The sequence spans 91 residues: Small ribosomal subunit protein bS16 (91 aa).

It belongs to the bacterial ribosomal protein bS16 family.

This chain is Small ribosomal subunit protein bS16, found in Levilactobacillus brevis (strain ATCC 367 / BCRC 12310 / CIP 105137 / JCM 1170 / LMG 11437 / NCIMB 947 / NCTC 947) (Lactobacillus brevis).